A 321-amino-acid chain; its full sequence is GDP-L-fucose synthase (321 aa).

14-20 (GGSGLVG) is an NADP(+) binding site. Tyr143 (proton donor/acceptor) is an active-site residue. NADP(+) contacts are provided by residues Lys147, 170 to 173 (PTNV), and His186. Substrate contacts are provided by Lys194, Trp208, Arg215, and Asp277.

This sequence belongs to the NAD(P)-dependent epimerase/dehydratase family. Fucose synthase subfamily. As to quaternary structure, homodimer.

It catalyses the reaction GDP-beta-L-fucose + NADP(+) = GDP-4-dehydro-alpha-D-rhamnose + NADPH + H(+). It functions in the pathway nucleotide-sugar biosynthesis; GDP-L-fucose biosynthesis via de novo pathway; GDP-L-fucose from GDP-alpha-D-mannose: step 2/2. Its function is as follows. Catalyzes the two-step NADP-dependent conversion of GDP-4-dehydro-6-deoxy-D-mannose to GDP-fucose, involving an epimerase and a reductase reaction. The protein is GDP-L-fucose synthase of Homo sapiens (Human).